Consider the following 1297-residue polypeptide: Protein Atossa (1297 aa).

Disordered stretches follow at residues 1–22 (MIPTSVTNSPPPAGLGQNGASA) and 117–149 (TNPYGSMGGSENRAVNGSGSTGSPSSSSLTHQR). Positions 133-144 (GSGSTGSPSSSS) are enriched in low complexity. A transactivation domain 1 (TAD1) region spans residues 174-182 (VSLAINDLN). 5 disordered regions span residues 206–227 (SSAGGGTNNSSAASSPGSNSSD), 287–311 (TPTTTATATASSGASSSASRPKHGP), 518–655 (GLPH…ETQS), 704–741 (SNGTANGSTNGATDDGDDSDTTASEMEETSSCSLSSAD), and 1017–1048 (AAHKRRSRHLSDRSDRSSLGSDEQLSDEDLES). 2 stretches are compositionally biased toward low complexity: residues 213–226 (NNSSAASSPGSNSS) and 287–305 (TPTTTATATASSGASSSAS). Residues 564 to 578 (SALTPTTTAGGSNCD) show a composition bias toward polar residues. Over residues 605 to 620 (QKYRKRMQRRDKKRER) the composition is skewed to basic residues. 2 stretches are compositionally biased toward low complexity: residues 643 to 655 (SQTQSQTTSETQS) and 706 to 716 (GTANGSTNGAT). A compositionally biased stretch (acidic residues) spans 717–731 (DDGDDSDTTASEMEE). Residues 1074 to 1132 (LLGNLEESLLQRRLMPKIEVMGFTLQLGASGGFCPTQVNIPAVSYFYELHGETLSTPYL) are required for macropage invasion. Positions 1150–1158 (VQATLLNPI) are transactivation domain 2 (TAD2). Residues 1192–1213 (SQDQDEGHKVPRSPTVTSTTSK) form a disordered region. Residues 1203–1212 (RSPTVTSTTS) show a composition bias toward low complexity.

Belongs to the ATOS family. In terms of tissue distribution, expressed in macrophages.

The protein resides in the nucleus. Functionally, transcription regulator that synchronizes transcriptional and translational programs to promote macrophage invasion of tissues. Required in macrophages for their early invasion into the extended germband. Induces transcriptional expression of metabolic enzymes as well as of the translational regulator pths/DDX47. With pths/DDX47, adjusts transcription and translation of a subset of OXPHOS genes to increase mitochondrial bioenergetics and allow macrophage tissue invasion. The protein is Protein Atossa of Drosophila melanogaster (Fruit fly).